Here is a 174-residue protein sequence, read N- to C-terminus: Shikimate kinase (174 aa).

14 to 19 contacts ATP; that stretch reads GAGKST. Ser-18 is a Mg(2+) binding site. Positions 36, 60, and 82 each coordinate substrate. Residue Arg-120 coordinates ATP. Residue Arg-139 coordinates substrate. Position 156 (Gln-156) interacts with ATP.

The protein belongs to the shikimate kinase family. In terms of assembly, monomer. Mg(2+) is required as a cofactor.

The protein localises to the cytoplasm. The enzyme catalyses shikimate + ATP = 3-phosphoshikimate + ADP + H(+). It functions in the pathway metabolic intermediate biosynthesis; chorismate biosynthesis; chorismate from D-erythrose 4-phosphate and phosphoenolpyruvate: step 5/7. In terms of biological role, catalyzes the specific phosphorylation of the 3-hydroxyl group of shikimic acid using ATP as a cosubstrate. The sequence is that of Shikimate kinase from Vibrio cholerae serotype O1 (strain ATCC 39541 / Classical Ogawa 395 / O395).